The following is a 507-amino-acid chain: tRNA (guanine(10)-N(2))-methyltransferase TRMT11 (507 aa).

Positions 459 to 475 are enriched in basic and acidic residues; it reads EKTKKKEQKKKSVENHL. Residues 459 to 507 form a disordered region; sequence EKTKKKEQKKKSVENHLKSKNNNDVINNNSNDTNSNNNCNNENNIENQK. The segment covering 480–507 has biased composition (low complexity); it reads NNDVINNNSNDTNSNNNCNNENNIENQK.

This sequence belongs to the class I-like SAM-binding methyltransferase superfamily. TRM11 methyltransferase family. Part of the heterodimeric TRMT11-TRM112 methyltransferase complex; this complex forms an active tRNA methyltransferase, where TRMT112 acts as an activator of the catalytic subunit TRMT11.

It localises to the cytoplasm. It catalyses the reaction guanosine(10) in tRNA + S-adenosyl-L-methionine = N(2)-methylguanosine(10) in tRNA + S-adenosyl-L-homocysteine + H(+). Its function is as follows. Catalytic subunit of the TRMT11-TRM112 methyltransferase complex, that specifically mediates the S-adenosyl-L-methionine-dependent N(2)-methylation of guanosine nucleotide at position 10 (m2G10) in tRNAs. This is one of the major tRNA (guanine-N(2))-methyltransferases. This chain is tRNA (guanine(10)-N(2))-methyltransferase TRMT11 (trmt11), found in Dictyostelium discoideum (Social amoeba).